Here is a 66-residue protein sequence, read N- to C-terminus: Clusterin (66 aa).

The protein belongs to the clusterin family. In terms of assembly, antiparallel disulfide-linked heterodimer of an alpha chain and a beta chain. Self-associates and forms higher oligomers. Interacts with a broad range of misfolded proteins, including APP, APOC2 and LYZ. Slightly acidic pH promotes interaction with misfolded proteins. Forms high-molecular weight oligomers upon interaction with misfolded proteins. Interacts with APOA1, LRP2, CLUAP1 and PON1. Interacts with the complement membrane attack complex. Interacts (via alpha chain) with XRCC6. Interacts with SYVN1, COMMD1, BTRC, CUL1 and with ubiquitin and SCF (SKP1-CUL1-F-box protein) E3 ubiquitin-protein ligase complexes. Interacts (via alpha chain) with BAX in stressed cells, where BAX undergoes a conformation change leading to association with the mitochondrial membrane. Does not interact with BAX in unstressed cells. Found in a complex with LTF, CLU, EPPIN and SEMG1. Interacts (immaturely glycosylated pre-secreted form) with HSPA5; this interaction promotes CLU stability and facilitates stress-induced CLU retrotranslocation from the secretory pathway to the mitochondria, thereby reducing stress-induced apoptosis by stabilizing mitochondrial membrane integrity. Interacts with BCL2L1; this interaction releases and activates BAX and promotes cell death. Interacts with TGFBR2 and ACVR1. Interacts (secreted form) with STMN3; this interaction may act as an important modulator during neuronal differentiation. Component of a epididymal complex at least composed of soluble form of prion protein PRNP, CLU, BPI, CES5A, MANBA and GLB1. Post-translationally, proteolytically cleaved on its way through the secretory system, probably within the Golgi lumen. Proteolytic cleavage is not necessary for its chaperone activity. All non-secreted forms are not proteolytically cleaved. Chaperone activity of uncleaved forms is dependent on a non-reducing environment. Polyubiquitinated, leading to proteasomal degradation. Under cellular stress, the intracellular level of cleaved form is reduced due to proteasomal degradation. In terms of processing, heavily N-glycosylated. About 30% of the protein mass is comprised of complex N-linked carbohydrate. Endoplasmic reticulum (ER) stress induces changes in glycosylation status and increases level of hypoglycosylated forms. Core carbohydrates are essential for chaperone activity. Non-secreted forms are hypoglycosylated or unglycosylated.

It is found in the secreted. Its subcellular location is the nucleus. The protein resides in the cytoplasm. The protein localises to the mitochondrion membrane. It localises to the cytosol. It is found in the microsome. Its subcellular location is the endoplasmic reticulum. The protein resides in the mitochondrion. The protein localises to the perinuclear region. It localises to the cytoplasmic vesicle. It is found in the secretory vesicle. Its subcellular location is the chromaffin granule. Functions as extracellular chaperone that prevents aggregation of non native proteins. Prevents stress-induced aggregation of blood plasma proteins. Inhibits formation of amyloid fibrils by APP, APOC2, B2M, CALCA, CSN3, SNCA and aggregation-prone LYZ variants (in vitro). Does not require ATP. Maintains partially unfolded proteins in a state appropriate for subsequent refolding by other chaperones, such as HSPA8/HSC70. Does not refold proteins by itself. Binding to cell surface receptors triggers internalization of the chaperone-client complex and subsequent lysosomal or proteasomal degradation. When secreted, protects cells against apoptosis and against cytolysis by complement: inhibits assembly of the complement membrane attack complex (MAC) by preventing polymerization of C9 pore component of the MAC complex. Intracellular forms interact with ubiquitin and SCF (SKP1-CUL1-F-box protein) E3 ubiquitin-protein ligase complexes and promote the ubiquitination and subsequent proteasomal degradation of target proteins. Promotes proteasomal degradation of COMMD1 and IKBKB. Modulates NF-kappa-B transcriptional activity. Following stress, promotes apoptosis. Inhibits apoptosis when associated with the mitochondrial membrane by interference with BAX-dependent release of cytochrome c into the cytoplasm. Plays a role in the regulation of cell proliferation. An intracellular form suppresses stress-induced apoptosis by stabilizing mitochondrial membrane integrity through interaction with HSPA5. Secreted form does not affect caspase or BAX-mediated intrinsic apoptosis and TNF-induced NF-kappa-B-activity. Secreted form act as an important modulator during neuronal differentiation through interaction with STMN3. Plays a role in the clearance of immune complexes that arise during cell injury. This chain is Clusterin (CLU), found in Ovis aries (Sheep).